A 250-amino-acid chain; its full sequence is ATP synthase subunit a (250 aa).

6 consecutive transmembrane segments (helical) span residues serine 31–glycine 51, phenylalanine 85–isoleucine 105, leucine 115–tyrosine 135, leucine 144–isoleucine 164, phenylalanine 194–glycine 214, and valine 217–leucine 237.

Belongs to the ATPase A chain family. As to quaternary structure, F-type ATPases have 2 components, CF(1) - the catalytic core - and CF(0) - the membrane proton channel. CF(1) has five subunits: alpha(3), beta(3), gamma(1), delta(1), epsilon(1). CF(0) has four main subunits: a, b, b' and c.

It is found in the cell inner membrane. Functionally, key component of the proton channel; it plays a direct role in the translocation of protons across the membrane. The chain is ATP synthase subunit a from Rhodopseudomonas palustris (strain BisB5).